A 147-amino-acid polypeptide reads, in one-letter code: Nucleoside diphosphate kinase (147 aa).

The ATP site is built by K9, F57, R85, T91, R102, and N112. H115 functions as the Pros-phosphohistidine intermediate in the catalytic mechanism.

The protein belongs to the NDK family. As to quaternary structure, homotetramer. It depends on Mg(2+) as a cofactor.

It localises to the cytoplasm. It carries out the reaction a 2'-deoxyribonucleoside 5'-diphosphate + ATP = a 2'-deoxyribonucleoside 5'-triphosphate + ADP. The enzyme catalyses a ribonucleoside 5'-diphosphate + ATP = a ribonucleoside 5'-triphosphate + ADP. Its function is as follows. Major role in the synthesis of nucleoside triphosphates other than ATP. The ATP gamma phosphate is transferred to the NDP beta phosphate via a ping-pong mechanism, using a phosphorylated active-site intermediate. This chain is Nucleoside diphosphate kinase, found in Listeria innocua serovar 6a (strain ATCC BAA-680 / CLIP 11262).